The following is a 276-amino-acid chain: Ribosomal RNA large subunit methyltransferase E (276 aa).

The S-adenosyl-L-methionine site is built by glycine 52, phenylalanine 54, aspartate 72, aspartate 90, and aspartate 114. Lysine 154 acts as the Proton acceptor in catalysis. Residues 203–249 (RAAPTANATPTPTSTSTSTPTSTSTPTSTSTSTPAPTLTQTQTQTPK) show a composition bias toward low complexity. A disordered region spans residues 203 to 276 (RAAPTANATP…AKTGASRRTR (74 aa)). Basic residues predominate over residues 265–276 (AKAKTGASRRTR).

The protein belongs to the class I-like SAM-binding methyltransferase superfamily. RNA methyltransferase RlmE family.

The protein localises to the cytoplasm. It catalyses the reaction uridine(2552) in 23S rRNA + S-adenosyl-L-methionine = 2'-O-methyluridine(2552) in 23S rRNA + S-adenosyl-L-homocysteine + H(+). In terms of biological role, specifically methylates the uridine in position 2552 of 23S rRNA at the 2'-O position of the ribose in the fully assembled 50S ribosomal subunit. The protein is Ribosomal RNA large subunit methyltransferase E of Anaeromyxobacter sp. (strain Fw109-5).